We begin with the raw amino-acid sequence, 280 residues long: Phosphatidylinositol N-acetylglucosaminyltransferase GPI2 subunit (280 aa).

Residues Met1–Arg53 lie on the Cytoplasmic side of the membrane. Residues Leu54–Thr74 traverse the membrane as a helical segment. Position 75 (Tyr75) is a topological domain, extracellular. Residues Ile76–Ile96 form a helical membrane-spanning segment. Over Ile97–Ser108 the chain is Cytoplasmic. The helical transmembrane segment at Phe109–Leu129 threads the bilayer. Topologically, residues Lys130–Thr135 are extracellular. A helical membrane pass occupies residues Thr136–Ile156. Residues Ser157 to Asp189 lie on the Cytoplasmic side of the membrane. A helical membrane pass occupies residues Val190–Val210. At Thr211 to Asn220 the chain is on the extracellular side. A helical membrane pass occupies residues Ile221–Phe241. Residues Ala242 to Asp280 are Cytoplasmic-facing.

This sequence belongs to the PIGC family. Component of the phosphatidylinositol N-acetylglucosaminyltransferase (GPI-GlcNAc transferase) complex composed of at least GPI1, GPI2, GPI3, GPI15, GPI19 and ERI1. Interacts with ERI1.

The protein resides in the membrane. The enzyme catalyses a 1,2-diacyl-sn-glycero-3-phospho-(1D-myo-inositol) + UDP-N-acetyl-alpha-D-glucosamine = a 6-(N-acetyl-alpha-D-glucosaminyl)-1-(1,2-diacyl-sn-glycero-3-phospho)-1D-myo-inositol + UDP + H(+). It functions in the pathway glycolipid biosynthesis; glycosylphosphatidylinositol-anchor biosynthesis. In terms of biological role, part of the complex catalyzing the transfer of N-acetylglucosamine from UDP-N-acetylglucosamine to phosphatidylinositol, the first step of GPI biosynthesis. This chain is Phosphatidylinositol N-acetylglucosaminyltransferase GPI2 subunit (GPI2), found in Saccharomyces cerevisiae (strain ATCC 204508 / S288c) (Baker's yeast).